Consider the following 294-residue polypeptide: UDP-3-O-acyl-N-acetylglucosamine deacetylase (294 aa).

Zn(2+) is bound by residues His-75, His-232, and Asp-236. The active-site Proton donor is the His-259.

It belongs to the LpxC family. It depends on Zn(2+) as a cofactor.

It catalyses the reaction a UDP-3-O-[(3R)-3-hydroxyacyl]-N-acetyl-alpha-D-glucosamine + H2O = a UDP-3-O-[(3R)-3-hydroxyacyl]-alpha-D-glucosamine + acetate. It functions in the pathway glycolipid biosynthesis; lipid IV(A) biosynthesis; lipid IV(A) from (3R)-3-hydroxytetradecanoyl-[acyl-carrier-protein] and UDP-N-acetyl-alpha-D-glucosamine: step 2/6. Its function is as follows. Catalyzes the hydrolysis of UDP-3-O-myristoyl-N-acetylglucosamine to form UDP-3-O-myristoylglucosamine and acetate, the committed step in lipid A biosynthesis. This is UDP-3-O-acyl-N-acetylglucosamine deacetylase from Campylobacter jejuni subsp. jejuni serotype O:23/36 (strain 81-176).